The sequence spans 90 residues: MLCAIYRSPKRDQTYLYIEKKDDFSRVPAELLASFGKPQFAMLLSLNERKSLATADIEKVKSALVEQGFYLQVPPPPESLLKMHLGETKA.

The region spanning 1–85 (MLCAIYRSPK…PPESLLKMHL (85 aa)) is the YcgL domain.

The chain is YcgL domain-containing protein YE2368 from Yersinia enterocolitica serotype O:8 / biotype 1B (strain NCTC 13174 / 8081).